The sequence spans 119 residues: Large ribosomal subunit protein uL18 (119 aa).

Belongs to the universal ribosomal protein uL18 family. As to quaternary structure, part of the 50S ribosomal subunit; part of the 5S rRNA/L5/L18/L25 subcomplex. Contacts the 5S and 23S rRNAs.

Its function is as follows. This is one of the proteins that bind and probably mediate the attachment of the 5S RNA into the large ribosomal subunit, where it forms part of the central protuberance. In Chlorobaculum tepidum (strain ATCC 49652 / DSM 12025 / NBRC 103806 / TLS) (Chlorobium tepidum), this protein is Large ribosomal subunit protein uL18.